Consider the following 278-residue polypeptide: Envelope glycoprotein L (278 aa).

A signal peptide spans 1 to 32 (MCRRPDCGFSFSPGPVILLWCCLLLSIVSSAA). The gL betaherpesvirus-type domain occupies 43-256 (VPAECPELTR…DKYYAGLPPE (214 aa)). Residues Cys-154 and Cys-159 are joined by a disulfide bond.

Belongs to the herpesviridae glycoprotein L (gL) family. Betaherpesvirinae gL subfamily. Interacts with glycoprotein H (gH); this interaction is necessary for the correct processing and cell surface expression of gH. Forms the envelope pentamer complex (PC) composed of gH, gL, UL128, UL130, and UL131A. The pentamer interacts with host NRP2. Forms the envelope trimer complex composed of gH, gL, and gO. The trimer interacts with host PDGFRA. The trimer also interacts with host EPHA2.

It localises to the virion membrane. It is found in the host cell membrane. The protein localises to the host Golgi apparatus. Its subcellular location is the host trans-Golgi network. In terms of biological role, the heterodimer glycoprotein H-glycoprotein L is required for the fusion of viral and plasma membranes leading to virus entry into the host cell. Acts as a functional inhibitor of gH and maintains gH in an inhibited form. Upon binding to host integrins, gL dissociates from gH leading to activation of the viral fusion glycoproteins gB and gH. In human cytomegalovirus, forms two distincts complexes to mediate viral entry, a trimer and a pentamer at the surface of the virion envelope. The gH-gL-gO trimer is required for infection in fibroblasts by interacting with host PDGFRA, and in glioblastoma cells by interacting with host EPHA2. The gH-gL-UL128-UL130-UL131A pentamer is essential for viral entry in epithelial, endothelial and myeloid cells via interaction with host NRP2. The polypeptide is Envelope glycoprotein L (Human cytomegalovirus (strain 119) (HHV-5)).